Consider the following 551-residue polypeptide: GMP synthase [glutamine-hydrolyzing] (551 aa).

Residues 40–233 (KILIVDFGSQ…VRKIAGLTGD (194 aa)) enclose the Glutamine amidotransferase type-1 domain. The active-site Nucleophile is the cysteine 117. Residues histidine 207 and glutamate 209 contribute to the active site. In terms of domain architecture, GMPS ATP-PPase spans 234 to 426 (WTMRAFREEE…LGLPEIFVGR (193 aa)). ATP is bound at residue 261-267 (SGGVDSA).

In terms of assembly, homodimer.

It catalyses the reaction XMP + L-glutamine + ATP + H2O = GMP + L-glutamate + AMP + diphosphate + 2 H(+). Its pathway is purine metabolism; GMP biosynthesis; GMP from XMP (L-Gln route): step 1/1. In terms of biological role, catalyzes the synthesis of GMP from XMP. This chain is GMP synthase [glutamine-hydrolyzing], found in Bradyrhizobium diazoefficiens (strain JCM 10833 / BCRC 13528 / IAM 13628 / NBRC 14792 / USDA 110).